The following is a 402-amino-acid chain: MQPSASPGLPLPKYCSVATTVKAPDLHGAVPPWDMSFTCPFATQAPWLATHCTFTRCTACCPCLHTVDRPWPGLRWLGRVGAAGGSWVLARKEPDGFYYLAQIKAAPELEKRGALVVEFEAPLVTGLELPAQQQRVVFPEDVIQFSPSVPHSLQLGDKVLAPWEPGQQRYGPGTVLVGLKKQKGQRASKEKEITVHFWNGKTTKVPLGSVRWVPPTVWKKAVERLQAPHTRDCHSSCLWVPHCSQLGPRAGCTTHRHPLDSSFLCPPCLSCACCQLQCQSSCPLVGPSWWPLTRTSELTTRKLPEPEVKPTAQLLPLQGPKEEPVAELSYNMFSSSSSSSEEENSESHLEMGLPLRQMVSRAVNTDPILSETTSLQQYSPHKPEWRYWRRNGPEPPPGKPGR.

Residues 332–402 (MFSSSSSSSE…PEPPPGKPGR (71 aa)) are disordered. The segment covering 370 to 379 (SETTSLQQYS) has biased composition (polar residues). Over residues 393 to 402 (PEPPPGKPGR) the composition is skewed to pro residues.

This is an uncharacterized protein from Mus musculus (Mouse).